The primary structure comprises 292 residues: Acetyl-coenzyme A carboxylase carboxyl transferase subunit beta (292 aa).

A CoA carboxyltransferase N-terminal domain is found at Leu-29–Asn-292. Zn(2+) contacts are provided by Cys-33, Cys-36, Cys-52, and Cys-55. Residues Cys-33–Cys-55 form a C4-type zinc finger.

This sequence belongs to the AccD/PCCB family. Acetyl-CoA carboxylase is a heterohexamer composed of biotin carboxyl carrier protein (AccB), biotin carboxylase (AccC) and two subunits each of ACCase subunit alpha (AccA) and ACCase subunit beta (AccD). Zn(2+) is required as a cofactor.

The protein resides in the cytoplasm. It catalyses the reaction N(6)-carboxybiotinyl-L-lysyl-[protein] + acetyl-CoA = N(6)-biotinyl-L-lysyl-[protein] + malonyl-CoA. It functions in the pathway lipid metabolism; malonyl-CoA biosynthesis; malonyl-CoA from acetyl-CoA: step 1/1. Component of the acetyl coenzyme A carboxylase (ACC) complex. Biotin carboxylase (BC) catalyzes the carboxylation of biotin on its carrier protein (BCCP) and then the CO(2) group is transferred by the transcarboxylase to acetyl-CoA to form malonyl-CoA. This Prochlorococcus marinus (strain MIT 9515) protein is Acetyl-coenzyme A carboxylase carboxyl transferase subunit beta.